Reading from the N-terminus, the 130-residue chain is Small ribosomal subunit protein uS8 (130 aa).

The protein belongs to the universal ribosomal protein uS8 family. Part of the 30S ribosomal subunit.

Functionally, one of the primary rRNA binding proteins, it binds directly to 16S rRNA central domain where it helps coordinate assembly of the platform of the 30S subunit. This chain is Small ribosomal subunit protein uS8, found in Halorubrum lacusprofundi (strain ATCC 49239 / DSM 5036 / JCM 8891 / ACAM 34).